The chain runs to 227 residues: dTTP/UTP pyrophosphatase (227 aa).

Asp98 (proton acceptor) is an active-site residue.

The protein belongs to the Maf family. YhdE subfamily. Requires a divalent metal cation as cofactor.

Its subcellular location is the cytoplasm. It carries out the reaction dTTP + H2O = dTMP + diphosphate + H(+). It catalyses the reaction UTP + H2O = UMP + diphosphate + H(+). Functionally, nucleoside triphosphate pyrophosphatase that hydrolyzes dTTP and UTP. May have a dual role in cell division arrest and in preventing the incorporation of modified nucleotides into cellular nucleic acids. The chain is dTTP/UTP pyrophosphatase from Bartonella quintana (strain Toulouse) (Rochalimaea quintana).